The chain runs to 79 residues: UPF0154 protein SSP1415 (79 aa).

Residues 4–24 (WLAIVLIVLALILGLVGGFFL) form a helical membrane-spanning segment.

Belongs to the UPF0154 family.

The protein resides in the membrane. This is UPF0154 protein SSP1415 from Staphylococcus saprophyticus subsp. saprophyticus (strain ATCC 15305 / DSM 20229 / NCIMB 8711 / NCTC 7292 / S-41).